A 720-amino-acid polypeptide reads, in one-letter code: 1,4-alpha-glucan branching enzyme GlgB (720 aa).

The Nucleophile role is filled by aspartate 400. The active-site Proton donor is the glutamate 453.

This sequence belongs to the glycosyl hydrolase 13 family. GlgB subfamily. In terms of assembly, monomer.

The catalysed reaction is Transfers a segment of a (1-&gt;4)-alpha-D-glucan chain to a primary hydroxy group in a similar glucan chain.. It functions in the pathway glycan biosynthesis; glycogen biosynthesis. Catalyzes the formation of the alpha-1,6-glucosidic linkages in glycogen by scission of a 1,4-alpha-linked oligosaccharide from growing alpha-1,4-glucan chains and the subsequent attachment of the oligosaccharide to the alpha-1,6 position. This is 1,4-alpha-glucan branching enzyme GlgB from Chlamydia pneumoniae (Chlamydophila pneumoniae).